We begin with the raw amino-acid sequence, 615 residues long: Sodium-dependent dopamine transporter (615 aa).

The disordered stretch occupies residues 1-39 (MQLVPTDDPDEKIGRTSNGMQNATLPIDGPVNTEPKDPA). Over 1–46 (MQLVPTDDPDEKIGRTSNGMQNATLPIDGPVNTEPKDPAREQWSGK) the chain is Cytoplasmic. Over residues 15-24 (RTSNGMQNAT) the composition is skewed to polar residues. Residues 47–72 (LDFLLSVVGFAVDLGNIWRFPYLCFK) form a helical membrane-spanning segment. Residues Gly55, Ala57, Val58, and Asn62 each contribute to the Na(+) site. At 73–76 (NGGG) the chain is on the extracellular side. Residues 77–100 (VFLIPYSIMVLLTGVPLFYMELCL) form a helical membrane-spanning segment. At 101–120 (GQYYRKGAITTWGRICPLFK) the chain is on the cytoplasmic side. A helical transmembrane segment spans residues 121-151 (GIGYCVILTAFYVDFFYNVILAWGLHYLYTS). The Extracellular portion of the chain corresponds to 152–229 (FSFNLPWASC…IRSVTDLGNV (78 aa)). A disulfide bridge links Cys161 with Cys170. 2 N-linked (GlcNAc...) asparagine glycosylation sites follow: Asn162 and Asn187. A helical transmembrane segment spans residues 230–250 (RWDIALSLFVVYLICYFSMWK). At 251–253 (GIH) the chain is on the cytoplasmic side. Residues 254–278 (TSGKVVWFTALFPYVVLGILFIRGV) traverse the membrane as a helical segment. Topologically, residues 279-302 (TLPGWQNGIEYYLRPNFEMLKRPS) are extracellular. The helical transmembrane segment at 303–328 (VWQDAATQVFFSLGPGFGVLMAYSSY) threads the bilayer. A Na(+)-binding site is contributed by Ser314. The Cytoplasmic portion of the chain corresponds to 329 to 334 (NDFHNN). A helical membrane pass occupies residues 335–358 (VYVDALFTSFINCATSFLSGFVIF). Position 346 (Asn346) interacts with Na(+). Topologically, residues 359–398 (SVLGYMSCKSGKPIEAVAQEGPGLVFVVYPEALSTMPYAP) are extracellular. A helical transmembrane segment spans residues 399–424 (FWSVLFFLMLMTLGLDSSFGGSEAII). 3 residues coordinate Na(+): Leu411, Asp414, and Ser415. Residues 425 to 439 (TGLSDEFPILKKNRE) are Cytoplasmic-facing. The helical transmembrane segment at 440–460 (VFVGCLFAFYMVIGIAMCTEG) threads the bilayer. A topological domain (extracellular) is located at residue Gly461. The helical transmembrane segment at 462–488 (ILIMEWLIIYGTTWGLLIAVFCEAMVI) threads the bilayer. The Cytoplasmic portion of the chain corresponds to 489–518 (AYIYGLRQFVHDVKEMMGFRPGNYWKFCWS). Residues 519–541 (CAAPFILLSMITSNFINYQALTY) traverse the membrane as a helical segment. Topologically, residues 542–544 (QDY) are extracellular. A helical transmembrane segment spans residues 545-565 (TYPTAANVIGIIFALSGASFI). Over 566-615 (PLVGIYKFVNARGNTISEKWQRVTMPYRKRPNQTEYIPIPTTQPHSDIML) the chain is Cytoplasmic.

It belongs to the sodium:neurotransmitter symporter (SNF) (TC 2.A.22) family.

The protein localises to the cell membrane. Functionally, dopamine transporter. Terminates the action of dopamine by its high affinity sodium-dependent reuptake into presynaptic terminals. Plays a role in the learned avoidance behavior of animals exposed to food that induces mitochondrial stress. The protein is Sodium-dependent dopamine transporter of Caenorhabditis elegans.